The following is a 386-amino-acid chain: 5-hydroxytryptamine receptor 1B (386 aa).

Residues 1–42 are Extracellular-facing; the sequence is MEEQGIQCAPPPPAASQTGVPLVNLSHNCSAESHIYQDSIAL. Asparagine 24 and asparagine 28 each carry an N-linked (GlcNAc...) asparagine glycan. Residues 43–68 form a helical membrane-spanning segment; it reads PWKVLLVALLALITLATTLSNAFVIA. At 69–82 the chain is on the cytoplasmic side; sequence TVYRTRKLHTPANY. The chain crosses the membrane as a helical span at residues 83–107; that stretch reads LIASLAVTDLLVSILVMPVSTMYTV. Residues 108-115 lie on the Extracellular side of the membrane; it reads TGRWTLGQ. The helical transmembrane segment at 116–141 threads the bilayer; sequence VVCDFWLSSDITCCTASIMHLCVIAL. Residues cysteine 118 and cysteine 195 are joined by a disulfide bond. The ergotamine site is built by aspartate 125 and threonine 130. The DRY motif; important for ligand-induced conformation changes and signaling motif lies at 142 to 144; sequence DRY. The Cytoplasmic segment spans residues 142–161; that stretch reads DRYWAITDAVEYAAKRTPKR. The helical transmembrane segment at 162 to 180 threads the bilayer; that stretch reads AAIMIALVWVFSISISLPP. The Extracellular portion of the chain corresponds to 181 to 201; that stretch reads FFWRQAKAEEEVLTCLVNTDH. Valine 197 serves as a coordination point for ergotamine. Residues 202–225 form a helical membrane-spanning segment; that stretch reads VLYTVYSTGGAFYLPTLLLIALYG. The Cytoplasmic portion of the chain corresponds to 226-311; it reads RIYVEARSRI…AARERKATKT (86 aa). The segment covering 255-268 has biased composition (polar residues); sequence DSPGSTTSVTSINS. Residues 255 to 278 form a disordered region; sequence DSPGSTTSVTSINSRAPDLPSESG. A helical membrane pass occupies residues 312–333; the sequence is LGIILGAFIVCWLPFFIISLVM. Residues 334–343 are Extracellular-facing; sequence PICKDACWFH. A helical membrane pass occupies residues 344 to 366; sequence MATLDFFNWLGYLNSLINPIIYT. An NPxxY motif; important for ligand-induced conformation changes and signaling motif is present at residues 361 to 365; that stretch reads NPIIY. At 367-386 the chain is on the cytoplasmic side; that stretch reads MSNEDFKQAFHKLIRFKCAG. Cysteine 384 carries the S-palmitoyl cysteine lipid modification.

It belongs to the G-protein coupled receptor 1 family. As to quaternary structure, homodimer. Heterodimer with HTR1D. Phosphorylated. Desensitization of the receptor may be mediated by its phosphorylation. Post-translationally, palmitoylated.

It is found in the cell membrane. Functionally, G-protein coupled receptor for 5-hydroxytryptamine (serotonin). Also functions as a receptor for ergot alkaloid derivatives, various anxiolytic and antidepressant drugs and other psychoactive substances, such as lysergic acid diethylamide (LSD). Ligand binding causes a conformation change that triggers signaling via guanine nucleotide-binding proteins (G proteins) and modulates the activity of downstream effectors, such as adenylate cyclase. HTR1B is coupled to G(i)/G(o) G alpha proteins and mediates inhibitory neurotransmission by inhibiting adenylate cyclase activity. Arrestin family members inhibit signaling via G proteins and mediate activation of alternative signaling pathways. Regulates the release of 5-hydroxytryptamine, dopamine and acetylcholine in the brain, and thereby affects neural activity, nociceptive processing, pain perception, mood and behavior. Besides, plays a role in vasoconstriction of cerebral arteries. The chain is 5-hydroxytryptamine receptor 1B (HTR1B) from Cricetulus griseus (Chinese hamster).